A 211-amino-acid polypeptide reads, in one-letter code: Ethylene-responsive transcription factor LEP (211 aa).

2 disordered regions span residues 1–21 (MNTTSSKSKKKQDDQVGTRFL) and 74–110 (NFVYSDMPPSSSVTSIVSPDDPPPPPPPPAPPSNDPV). The AP2/ERF DNA-binding region spans 19-76 (RFLGVRRRPWGRYAAEIRDPTTKERHWLGTFDTAEEAALAYDRAARSMRGTRARTNFV). Over residues 81–92 (PPSSSVTSIVSP) the composition is skewed to low complexity. Residues 93 to 107 (DDPPPPPPPPAPPSN) show a composition bias toward pro residues.

It belongs to the AP2/ERF transcription factor family. ERF subfamily. As to expression, expressed in germinating seeds. Present in young shoots, at low levels, especially in leaf primordia and developing leaf blades. Also detected in vascular tissue, mostly in xylem, of young leaves, petioles and hypocotyls.

It localises to the nucleus. Its function is as follows. Cell division-promoting factor involved in leaf blade differentiation, inflorescence branching, as well as in carpel and silique shape. Promotes the number of xylem cells. Positively regulates the gibberellin signaling pathway leading to germination, hypocotyl elongation, and leaf expansion. Probably acts as a transcriptional activator. Binds to the GCC-box pathogenesis-related promoter element. May be involved in the regulation of gene expression by stress factors and by components of stress signal transduction pathways. The protein is Ethylene-responsive transcription factor LEP (LEP) of Arabidopsis thaliana (Mouse-ear cress).